The sequence spans 505 residues: Protein disulfide-isomerase A3 (505 aa).

Positions 1-24 (MRLRRLALFPGVALLLAAARLAAA) are cleaved as a signal peptide. The region spanning 25–133 (SDVLELTDDN…IVSHLKKQAG (109 aa)) is the Thioredoxin 1 domain. Catalysis depends on nucleophile residues C57 and C60. A disulfide bridge links C57 with C60. At K61 the chain carries N6-methyllysine. A disulfide bridge links C85 with C92. N6-succinyllysine is present on K129. An N6-acetyllysine modification is found at K152. At K218 the chain carries N6-succinyllysine. An N6-acetyllysine modification is found at K252. The residue at position 319 (T319) is a Phosphothreonine. One can recognise a Thioredoxin 2 domain in the interval 343–485 (SRDGKALERF…FISYLQREAT (143 aa)). N6-acetyllysine is present on K362. Residues C406 and C409 each act as nucleophile in the active site. A disulfide bond links C406 and C409. Residues 484–505 (ATNPPVIQEEKPKKKKKAQEDL) are disordered. A compositionally biased stretch (basic and acidic residues) spans 491–505 (QEEKPKKKKKAQEDL). At K494 the chain carries N6-acetyllysine. A Prevents secretion from ER motif is present at residues 502-505 (QEDL).

This sequence belongs to the protein disulfide isomerase family. In terms of assembly, part of the major histocompatibility complex class I (MHC I) peptide loading complex composed of TAP1, TAP2, B2M, MHC heavy chain, TAPBP, PDIA3, and CALR. Interacts with ERP27 and CANX. Interacts with SERPINA2 and with SERPINA1. Interacts with ATP2A2. In terms of processing, within the major histocompatibility complex class I (MHC I) peptide loading complex forms reversible disulfide-linked heterodimers with TAPBP as part of its protein folding chaperone activity. This is essential to assist the dynamic assembly of the MHC I complex with high affinity antigens in the endoplasmic reticulum. Phosphorylated.

The protein localises to the endoplasmic reticulum. Its subcellular location is the endoplasmic reticulum lumen. The protein resides in the melanosome. The catalysed reaction is Catalyzes the rearrangement of -S-S- bonds in proteins.. Its function is as follows. Protein disulfide isomerase that catalyzes the formation, isomerization, and reduction or oxidation of disulfide bonds in client proteins and functions as a protein folding chaperone. Core component of the major histocompatibility complex class I (MHC I) peptide loading complex where it functions as an essential folding chaperone for TAPBP. Through TAPBP, assists the dynamic assembly of the MHC I complex with high affinity antigens in the endoplasmic reticulum. Therefore, plays a crucial role in the presentation of antigens to cytotoxic T cells in adaptive immunity. In Chlorocebus aethiops (Green monkey), this protein is Protein disulfide-isomerase A3 (PDIA3).